Here is a 284-residue protein sequence, read N- to C-terminus: Protein-S-isoprenylcysteine O-methyltransferase (284 aa).

The Cytoplasmic segment spans residues 1-16; it reads MAGCAARVPPGSEARL. The chain crosses the membrane as a helical span at residues 17 to 33; that stretch reads SLATFLLGASVLALPLL. Topologically, residues 34–41 are lumenal; it reads TRAGLQGR. The helical transmembrane segment at 42–59 threads the bilayer; the sequence is TGLALYVAGLNALLLLLY. Residues 60–69 are Cytoplasmic-facing; it reads RPPRYQIAIR. The chain crosses the membrane as a helical span at residues 70-87; sequence ACFLGFVFGCGVLLSFSQ. Topologically, residues 88 to 92 are lumenal; it reads SSWNH. Residues 93–112 form a helical membrane-spanning segment; it reads FGWYVCSLSLFHYSEYLVTA. Over 113–131 the chain is Cytoplasmic; that stretch reads VNNPKSLSLDSFLLNHSLE. A helical transmembrane segment spans residues 132–149; that stretch reads YTVAALSSWIEFTLENIF. Over 150-154 the chain is Lumenal; that stretch reads WPELK. Residues 155-174 traverse the membrane as a helical segment; the sequence is QITWLSAAGLLMVIFGECLR. Over 175 to 212 the chain is Cytoplasmic; the sequence is KVAMFTAGSNFNHVVQSEKSDTHTLVTSGVYAWCRHPS. S-adenosyl-L-methionine contacts are provided by residues glutamine 190, 197–200, tyrosine 205, and 210–213; these read HTLV and HPSY. A helical transmembrane segment spans residues 213–228; it reads YVGWFYWSIGTQVMLC. Residue asparagine 229 is a topological domain, lumenal. A helical membrane pass occupies residues 230 to 244; sequence PICGVVYALTVWRFF. The Cytoplasmic portion of the chain corresponds to 245–284; sequence RDRTEEEEISLIHFFGEEYLDYKKRVPTGLPFIKGVKVGL. Arginine 247 provides a ligand contact to substrate. Glutamate 251 is an S-adenosyl-L-methionine binding site.

This sequence belongs to the class VI-like SAM-binding methyltransferase superfamily. Isoprenylcysteine carboxyl methyltransferase family.

It localises to the endoplasmic reticulum membrane. It catalyses the reaction [protein]-C-terminal S-[(2E,6E)-farnesyl]-L-cysteine + S-adenosyl-L-methionine = [protein]-C-terminal S-[(2E,6E)-farnesyl]-L-cysteine methyl ester + S-adenosyl-L-homocysteine. Its function is as follows. Catalyzes the post-translational methylation of isoprenylated C-terminal cysteine residues. This is Protein-S-isoprenylcysteine O-methyltransferase from Rattus norvegicus (Rat).